The sequence spans 837 residues: Protein translocase subunit SecA (837 aa).

Residues Q85, G103–T107, and D493 each bind ATP. C821, C823, C832, and H833 together coordinate Zn(2+).

Belongs to the SecA family. In terms of assembly, monomer and homodimer. Part of the essential Sec protein translocation apparatus which comprises SecA, SecYEG and auxiliary proteins SecDF. Other proteins may also be involved. Requires Zn(2+) as cofactor.

The protein localises to the cell membrane. Its subcellular location is the cytoplasm. The catalysed reaction is ATP + H2O + cellular proteinSide 1 = ADP + phosphate + cellular proteinSide 2.. Its function is as follows. Part of the Sec protein translocase complex. Interacts with the SecYEG preprotein conducting channel. Has a central role in coupling the hydrolysis of ATP to the transfer of proteins into and across the cell membrane, serving as an ATP-driven molecular motor driving the stepwise translocation of polypeptide chains across the membrane. In Streptococcus pneumoniae (strain Taiwan19F-14), this protein is Protein translocase subunit SecA.